The chain runs to 529 residues: Listeriolysin O (529 aa).

The signal sequence occupies residues 1-24 (MKKIMLVFITLILVSLPIAQQTEA). A run of 4 beta stranded transmembrane segments spans residues 214–227 (ESQL…AFKA), 234–243 (VNFGAISEGK), 312–321 (STKVKAAFDA), and 329–341 (SGDV…IKNS). Residues 483-493 (ECTGLAWEWWR) carry the Conserved undecapeptide motif. The short motif at 515–516 (TL) is the Cholesterol binding element.

Belongs to the cholesterol-dependent cytolysin family. Homooligomeric pore complex of 35 to 50 subunits; when inserted in the host membrane.

It is found in the secreted. The protein resides in the host membrane. Its subcellular location is the host cell membrane. With respect to regulation, activity of listeriolysin O is regulated on multiple levels. It should be high in the phagosome, thereby allowing escape of the bacteria from the phagosomal compartment. Then, once inside the host cytosol, the activity must be controlled to prevent lysis of the host plasma membrane and loss of the intracellular environment. Its function is as follows. A cholesterol-dependent toxin that causes cytolysis by forming pores in cholesterol containing host membranes. After binding to target membranes, the protein undergoes a major conformation change, leading to its insertion in the host membrane and formation of an oligomeric pore complex. Cholesterol is required for binding to host membranes, membrane insertion and pore formation; cholesterol binding is mediated by a Thr-Leu pair in the C-terminus. Acts as a major virulence factor required for the escape of bacteria from phagosomal vacuoles and entry into the host cytosol. Can be reversibly inactivated by oxidation. The protein is Listeriolysin O (hly) of Listeria monocytogenes serotype 4b (strain F2365).